The following is a 545-amino-acid chain: ATP synthase F(1) complex subunit alpha, mitochondrial (545 aa).

Gln-216, Gly-218, Lys-219, Thr-220, and Ser-221 together coordinate ATP. A Mg(2+)-binding site is contributed by Thr-220. Asp-304 provides a ligand contact to Mg(2+). ATP is bound by residues Gln-465 and Gln-467.

This sequence belongs to the ATPase alpha/beta chains family. Homotrimer. Component of the ATP synthase complex composed at least of ATP5F1A/subunit alpha, ATP5F1B/subunit beta, ATP5MC1/subunit c (homooctomer), MT-ATP6/subunit a, MT-ATP8/subunit 8, ATP5ME/subunit e, ATP5MF/subunit f, ATP5MG/subunit g, ATP5MK/subunit k, ATP5MJ/subunit j, ATP5F1C/subunit gamma, ATP5F1D/subunit delta, ATP5F1E/subunit epsilon, ATP5PF/subunit F6, ATP5PB/subunit b, ATP5PD/subunit d, ATP5PO/subunit OSCP. ATP synthase complex consists of a soluble F(1) head domain (subunits alpha(3) and beta(3)) - the catalytic core - and a membrane F(0) domain - the membrane proton channel (subunits c, a, 8, e, f, g, k and j). These two domains are linked by a central stalk (subunits gamma, delta, and epsilon) rotating inside the F1 region and a stationary peripheral stalk (subunits F6, b, d, and OSCP).

It localises to the mitochondrion inner membrane. Its function is as follows. Subunit alpha, of the mitochondrial membrane ATP synthase complex (F(1)F(0) ATP synthase or Complex V) that produces ATP from ADP in the presence of a proton gradient across the membrane which is generated by electron transport complexes of the respiratory chain. ATP synthase complex consist of a soluble F(1) head domain - the catalytic core - and a membrane F(1) domain - the membrane proton channel. These two domains are linked by a central stalk rotating inside the F(1) region and a stationary peripheral stalk. During catalysis, ATP synthesis in the catalytic domain of F(1) is coupled via a rotary mechanism of the central stalk subunits to proton translocation. In vivo, can only synthesize ATP although its ATP hydrolase activity can be activated artificially in vitro. With the catalytic subunit beta (ATP5F1B), forms the catalytic core in the F(1) domain. Subunit alpha does not bear the catalytic high-affinity ATP-binding sites. The protein is ATP synthase F(1) complex subunit alpha, mitochondrial of Xenopus laevis (African clawed frog).